A 787-amino-acid polypeptide reads, in one-letter code: Signal transducer and activator of transcription 5B (787 aa).

Residue Y90 is modified to Phosphotyrosine. 2 positions are modified to phosphoserine: S128 and S193. Positions 232–321 (KHQKTLQLLR…MLAEVNATIT (90 aa)) are required for interaction with NMI. An SH2 domain is found at 589-686 (WNDGAILGFV…EVYSKYYTPV (98 aa)). Y682 carries the phosphotyrosine modification. Y699 is modified (phosphotyrosine; by HCK, JAK and PTK6).

This sequence belongs to the transcription factor STAT family. As to quaternary structure, upon activation, forms homodimers. Forms also heterodimers with related family members. Binds NR3C1. Interacts with NCOA1. Interacts with NMI. Interacts with SOCS7. Interacts (via SH2 domain) with INSR. Interacts with CPEB3; this inhibits STAT5B-mediated transcriptional activation. In terms of processing, tyrosine phosphorylated in response to signaling via activated KIT, resulting in translocation to the nucleus. Tyrosine phosphorylated in response to signaling via activated FLT3; wild-type FLT3 results in much weaker phosphorylation than constitutively activated mutant FLT3. Alternatively, can be phosphorylated by JAK2. Phosphorylation at Tyr-699 by PTK6 or HCK leads to an increase of its transcriptional activity.

Its subcellular location is the cytoplasm. It is found in the nucleus. Its function is as follows. Carries out a dual function: signal transduction and activation of transcription. Mediates cellular responses to the cytokine KITLG/SCF and other growth factors. Binds to the GAS element and activates PRL-induced transcription. Positively regulates hematopoietic/erythroid differentiation. The polypeptide is Signal transducer and activator of transcription 5B (STAT5B) (Homo sapiens (Human)).